A 79-amino-acid chain; its full sequence is Beta-hexatoxin-Mg1a (79 aa).

The N-terminal stretch at 1–20 (MKAPATTLILVMSLISVLWA) is a signal peptide. The propeptide occupies 21 to 50 (TPDLEEGDLLAELGDLIATDDEYPMKPEER). Disulfide bonds link Cys-52–Cys-66, Cys-59–Cys-71, and Cys-65–Cys-76.

Belongs to the neurotoxin 15 family. 01 (magi-5) subfamily. As to expression, expressed by the venom gland.

The protein resides in the secreted. Functionally, insect and vertebrate active toxin. Binds to site 4 of mammalian voltage-gated sodium channels and shifts the activation voltage of the mammalian Nav1.2a/SCN2A channel to more hyperpolarized voltages, whereas the insect channel, DmNav1 (para), is not affected. Competes for binding at site 3 of the insect sodium channel. Causes temporary paralysis when injected into lepidopteran larvae at 8.6 nmol/g. A low intracranial injection dose into mice causes lacrimation, closure of the eyes and sweating. A high injection dose causes extensive lacrimation and death. The protein is Beta-hexatoxin-Mg1a of Macrothele gigas (Japanese funnel web spider).